The primary structure comprises 292 residues: MLKDLVREKLLTIMNTKAYTQFNPEQLLQLENEMKIYMKSGDSALTEGNYFFLMEMLFYVLVYRNQDVDAQVVYNTLRDRLGENSYKMVIMKATLLQINGNDKGAIEYLENLLNDDLEYETDFVTYVSIAKKLIAIKTTSKNLSQESVLKEVVALTDKFPLDAELWWYASEIYFEMGQFEKACYCLEQVLCITPFNYACFGRLSETLYYEALRSKKQTKTELLEKALKNALRSVELSELYLKGWALVNIISRELGRNKQNDLIKLSASKLKEISAKSNNKDKITAELILNKI.

One copy of the TPR repeat lies at 163–196 (AELWWYASEIYFEMGQFEKACYCLEQVLCITPFN).

This sequence belongs to the EMC2 family. Component of the ER membrane protein complex (EMC), which is composed of EMC1, EMC2, EMC3, EMC4, EMC5 and EMC6.

Its subcellular location is the endoplasmic reticulum membrane. Part of the endoplasmic reticulum membrane protein complex (EMC) that enables the energy-independent insertion into endoplasmic reticulum membranes of newly synthesized membrane proteins. Preferentially accommodates proteins with transmembrane domains that are weakly hydrophobic or contain destabilizing features such as charged and aromatic residues. Involved in the cotranslational insertion of multi-pass membrane proteins in which stop-transfer membrane-anchor sequences become ER membrane spanning helices. It is also required for the post-translational insertion of tail-anchored/TA proteins in endoplasmic reticulum membranes. By mediating the proper cotranslational insertion of N-terminal transmembrane domains in an N-exo topology, with translocated N-terminus in the lumen of the ER, controls the topology of multi-pass membrane proteins. The chain is ER membrane protein complex subunit 2 (EMC2) from Saccharomyces cerevisiae (strain ATCC 204508 / S288c) (Baker's yeast).